We begin with the raw amino-acid sequence, 330 residues long: Agamous-like MADS-box protein AGL75 (330 aa).

The region spanning T19 to K61 is the MADS-box domain.

Interacts with MEE14/CBP1.

The protein resides in the nucleus. Functionally, probable transcription factor that may function in the maintenance of the proper function of the central cell in pollen tube attraction. The sequence is that of Agamous-like MADS-box protein AGL75 from Arabidopsis thaliana (Mouse-ear cress).